We begin with the raw amino-acid sequence, 396 residues long: MAKKVVTDLDLKDKKVLVRVDFNVPMKDGKITNDNRIVAALPTIEYILEQNGKAILFSHLGKVKTEEDKEGKSLRPVAARLSELLGKEVKFVPTTRGPELEKAIDELKDGEVLLFENTRFEDIDGKKESKNDPELGKYWASLGDVFVNDAFGTAHRAHASNVGIASNLESAAGFLMEKEIKFIGGVVDNPARPLVAILGGAKVSDKIGVIENLLTKADKVLVGGGMTFTFMAAQGQEIGKSLLEADKVELAKGLLEKAGDKLVLPVDAVVSKEFSNDAPFHTVSADSIPADEMGLDIGQATIDLFTKELQGAKTVVWNGPMGVFELSNFAKGTIGVCEAIANLTDATTIIGGGDSAAAAMDLGFADKFTHISTGGGASLEYLEGKELPGVASISDK.

Residues 21–23, R36, 59–62, R119, and R156 each bind substrate; these read DFN and HLGK. ATP is bound by residues K206, G294, E325, and 352–355; that span reads GGDS.

This sequence belongs to the phosphoglycerate kinase family. As to quaternary structure, monomer.

The protein resides in the cytoplasm. It carries out the reaction (2R)-3-phosphoglycerate + ATP = (2R)-3-phospho-glyceroyl phosphate + ADP. It participates in carbohydrate degradation; glycolysis; pyruvate from D-glyceraldehyde 3-phosphate: step 2/5. In Listeria monocytogenes serotype 4a (strain HCC23), this protein is Phosphoglycerate kinase.